The chain runs to 130 residues: Anti-adapter protein IraD (130 aa).

It belongs to the GpW/Gp25 family. IraD subfamily. As to quaternary structure, interacts with RssB.

The protein localises to the cytoplasm. Functionally, inhibits RpoS proteolysis by regulating RssB activity, thereby increasing the stability of the sigma stress factor RpoS during oxidative stress. Its effect on RpoS stability is due to its interaction with RssB, which probably blocks the interaction of RssB with RpoS, and the consequent delivery of the RssB-RpoS complex to the ClpXP protein degradation pathway. This Escherichia coli O139:H28 (strain E24377A / ETEC) protein is Anti-adapter protein IraD.